A 317-amino-acid chain; its full sequence is Putative peptide import ATP-binding protein BruAb2_0797 (317 aa).

Positions 7 to 250 constitute an ABC transporter domain; the sequence is LSVRGLAKHY…PQHPYTRALL (244 aa). Residue 43 to 50 coordinates ATP; that stretch reads GESGSGKT.

It belongs to the ABC transporter superfamily. The complex is composed of two ATP-binding proteins (BruAb2_0796 and BruAb2_0797), two transmembrane proteins (BruAb2_0794) and a solute-binding protein (BruAb2_0792).

It localises to the cell inner membrane. In terms of biological role, probably part of an ABC transporter complex that could be involved in peptide import. Probably responsible for energy coupling to the transport system. In Brucella abortus biovar 1 (strain 9-941), this protein is Putative peptide import ATP-binding protein BruAb2_0797.